Consider the following 355-residue polypeptide: Zinc finger protein CONSTANS-LIKE 1 (355 aa).

Residues cysteine 12, cysteine 15, cysteine 35, histidine 40, cysteine 55, cysteine 58, cysteine 78, and histidine 83 each coordinate Zn(2+). The segment at 12–54 (CDTCRSAACTVYCRADSAYLCSSCDAQVHAANRLASRHERVRV) adopts a B box-type 1; atypical zinc-finger fold. The B box-type 2; atypical zinc-finger motif lies at 55–97 (CQSCERAPAAFFCKADAASLCTTCDSEIHSANPLARRHQRVPI). Residues 252–264 (ESTTSDATVSNPR) are compositionally biased toward polar residues. The interval 252 to 281 (ESTTSDATVSNPRSPKAVTDQPPYPPAQML) is disordered. One can recognise a CCT domain in the interval 286–328 (REARVLRYREKKKMRKFEKTIRYASRKAYAEKRPRIKGRFAKK).

The protein belongs to the CONSTANS family. In terms of tissue distribution, highly expressed in leaves and at lower levels in stems, flowers and siliques. Not detected in roots.

It localises to the nucleus. Its function is as follows. Putative transcription factor that may be involved in the light input to the circadian clock but does not affect flowering time. This chain is Zinc finger protein CONSTANS-LIKE 1 (COL1), found in Arabidopsis thaliana (Mouse-ear cress).